A 408-amino-acid polypeptide reads, in one-letter code: Serine/threonine transporter SstT (408 aa).

9 helical membrane passes run 11–31 (LANG…VILA), 43–63 (FLGS…VFIL), 81–101 (PIVV…VVLS), 141–161 (ALMT…GLAL), 192–212 (IGIF…AIAG), 216–236 (LLAV…PLIV), 298–318 (MGGA…TLGI), 330–350 (VVAA…LLLI), and 357–377 (FGIS…IGVI).

This sequence belongs to the dicarboxylate/amino acid:cation symporter (DAACS) (TC 2.A.23) family.

It localises to the cell inner membrane. It catalyses the reaction L-serine(in) + Na(+)(in) = L-serine(out) + Na(+)(out). It carries out the reaction L-threonine(in) + Na(+)(in) = L-threonine(out) + Na(+)(out). Functionally, involved in the import of serine and threonine into the cell, with the concomitant import of sodium (symport system). This chain is Serine/threonine transporter SstT, found in Shewanella sp. (strain W3-18-1).